Here is a 402-residue protein sequence, read N- to C-terminus: UDP-N-acetylmuramoylalanine--D-glutamate ligase (402 aa).

97-103 contacts ATP; that stretch reads GTNGKTT.

The protein belongs to the MurCDEF family.

Its subcellular location is the cytoplasm. It carries out the reaction UDP-N-acetyl-alpha-D-muramoyl-L-alanine + D-glutamate + ATP = UDP-N-acetyl-alpha-D-muramoyl-L-alanyl-D-glutamate + ADP + phosphate + H(+). Its pathway is cell wall biogenesis; peptidoglycan biosynthesis. Functionally, cell wall formation. Catalyzes the addition of glutamate to the nucleotide precursor UDP-N-acetylmuramoyl-L-alanine (UMA). In Campylobacter jejuni subsp. jejuni serotype O:6 (strain 81116 / NCTC 11828), this protein is UDP-N-acetylmuramoylalanine--D-glutamate ligase.